The primary structure comprises 98 residues: Small ribosomal subunit protein bS18c (98 aa).

Residues 1 to 13 (MSKQSFDFKRYKP) show a composition bias toward basic and acidic residues. The segment at 1 to 26 (MSKQSFDFKRYKPEAPSGSRKRPLKK) is disordered.

It belongs to the bacterial ribosomal protein bS18 family. In terms of assembly, part of the 30S ribosomal subunit.

The protein localises to the plastid. The protein resides in the chloroplast. The chain is Small ribosomal subunit protein bS18c from Gnetum parvifolium (Small-leaved jointfir).